A 430-amino-acid chain; its full sequence is tRNA(Ile)-lysidine synthase (430 aa).

An ATP-binding site is contributed by 27 to 32; sequence SGGSDS.

It belongs to the tRNA(Ile)-lysidine synthase family.

It is found in the cytoplasm. It carries out the reaction cytidine(34) in tRNA(Ile2) + L-lysine + ATP = lysidine(34) in tRNA(Ile2) + AMP + diphosphate + H(+). Its function is as follows. Ligates lysine onto the cytidine present at position 34 of the AUA codon-specific tRNA(Ile) that contains the anticodon CAU, in an ATP-dependent manner. Cytidine is converted to lysidine, thus changing the amino acid specificity of the tRNA from methionine to isoleucine. This is tRNA(Ile)-lysidine synthase from Rickettsia felis (strain ATCC VR-1525 / URRWXCal2) (Rickettsia azadi).